A 159-amino-acid chain; its full sequence is ATP synthase subunit b (159 aa).

Residues 8 to 28 form a helical membrane-spanning segment; that stretch reads ILATIINFIILILILKHFFWD.

The protein belongs to the ATPase B chain family. F-type ATPases have 2 components, F(1) - the catalytic core - and F(0) - the membrane proton channel. F(1) has five subunits: alpha(3), beta(3), gamma(1), delta(1), epsilon(1). F(0) has three main subunits: a(1), b(2) and c(10-14). The alpha and beta chains form an alternating ring which encloses part of the gamma chain. F(1) is attached to F(0) by a central stalk formed by the gamma and epsilon chains, while a peripheral stalk is formed by the delta and b chains.

Its subcellular location is the cell membrane. In terms of biological role, f(1)F(0) ATP synthase produces ATP from ADP in the presence of a proton or sodium gradient. F-type ATPases consist of two structural domains, F(1) containing the extramembraneous catalytic core and F(0) containing the membrane proton channel, linked together by a central stalk and a peripheral stalk. During catalysis, ATP synthesis in the catalytic domain of F(1) is coupled via a rotary mechanism of the central stalk subunits to proton translocation. Its function is as follows. Component of the F(0) channel, it forms part of the peripheral stalk, linking F(1) to F(0). In Clostridium perfringens (strain SM101 / Type A), this protein is ATP synthase subunit b.